Consider the following 378-residue polypeptide: Acyl-coenzyme A diphosphatase NUDT19 (378 aa).

The Nudix hydrolase domain occupies 7–258 (HWREAASVLL…EIWLAPPQFY (252 aa)). The Nudix box signature appears at 105–126 (SPLPGEVAFRICAIRETFEEAG). Positions 120 and 124 each coordinate Mg(2+). The Microbody targeting signal signature appears at 376–378 (SRL).

The protein belongs to the Nudix hydrolase family. Monomer. Mg(2+) is required as a cofactor. Requires Mn(2+) as cofactor.

Its subcellular location is the peroxisome. The catalysed reaction is an acyl-CoA + H2O = an acyl-4'-phosphopantetheine + adenosine 3',5'-bisphosphate + 2 H(+). It carries out the reaction CoA + H2O = (R)-4'-phosphopantetheine + adenosine 3',5'-bisphosphate + 2 H(+). The enzyme catalyses hexanoyl-CoA + H2O = hexanoyl-4'-phosphopantetheine + adenosine 3',5'-bisphosphate + 2 H(+). It catalyses the reaction octanoyl-CoA + H2O = S-octanoyl-4'-phosphopantetheine + adenosine 3',5'-bisphosphate + 2 H(+). The catalysed reaction is butanoyl-CoA + H2O = S-butanoyl-4'-phosphopantetheine + adenosine 3',5'-bisphosphate + 2 H(+). It carries out the reaction propanoyl-CoA + H2O = propanoyl-4'-phosphopantetheine + adenosine 3',5'-bisphosphate + 2 H(+). The enzyme catalyses malonyl-CoA + H2O = malonyl-4'-phosphopantetheine + adenosine 3',5'-bisphosphate + 2 H(+). It catalyses the reaction succinyl-CoA + H2O = succinyl-4'-phosphopantetheine + adenosine 3',5'-bisphosphate + 2 H(+). The catalysed reaction is choloyl-CoA + H2O = S-choloyl-4'-phosphopantetheine + adenosine 3',5'-bisphosphate + 2 H(+). It carries out the reaction 4,8-dimethylnonanoyl-CoA + H2O = S-(4,8-dimethylnonanoyl)-4'-phosphopantetheine + adenosine 3',5'-bisphosphate + 2 H(+). The enzyme catalyses (9Z,12Z,15Z)-octadecatrienoyl-CoA + H2O = S-(9Z,12Z,15Z-octadecatrienoyl)-4'-phosphopantetheine + adenosine 3',5'-bisphosphate + 2 H(+). It catalyses the reaction (9Z,12Z)-octadecadienoyl-CoA + H2O = S-(9Z,12Z-octadecadienoyl)-4'-phosphopantetheine + adenosine 3',5'-bisphosphate + 2 H(+). The catalysed reaction is (9Z)-hexadecenoyl-CoA + H2O = S-(9Z-hexadecenoyl)-4'-phosphopantetheine + adenosine 3',5'-bisphosphate + 2 H(+). It carries out the reaction (9Z)-tetradecenoyl-CoA + H2O = S-(9Z-tetradecenoyl)-4'-phosphopantetheine + adenosine 3',5'-bisphosphate + 2 H(+). The enzyme catalyses (6Z)-octenoyl-CoA + H2O = S-(6Z-octenoyl)-4'-phosphopantetheine + adenosine 3',5'-bisphosphate + 2 H(+). It catalyses the reaction hexadecanoyl-CoA + H2O = S-hexadecanoyl-4'-phosphopantetheine + adenosine 3',5'-bisphosphate + 2 H(+). The catalysed reaction is tetradecanoyl-CoA + H2O = tetradecanoyl-4'-phosphopantetheine + adenosine 3',5'-bisphosphate + 2 H(+). It carries out the reaction dodecanoyl-CoA + H2O = S-dodecanoyl-4'-phosphopantetheine + adenosine 3',5'-bisphosphate + 2 H(+). The enzyme catalyses a 5'-end CoA-ribonucleoside in mRNA + H2O = a 5'-end phospho-adenosine-phospho-ribonucleoside in mRNA + (R)-4'-phosphopantetheine + 2 H(+). In terms of biological role, fatty acyl-coenzyme A (CoA) diphosphatase that hydrolyzes fatty acyl-CoA to yield acyl-4'-phosphopantetheine and adenosine 3',5'-bisphosphate. Mediates the hydrolysis of a wide range of CoA esters, including choloyl-CoA and branched-chain fatty-acyl-CoA esters and at low substrate concentrations medium and long-chain fatty-acyl-CoA esters are the primary substrates. Highest activity seen with medium-chain acyl-CoA esters and higher rates of activity seen with the unsaturated acyl-CoA esters compared with the saturated esters. Exhibits decapping activity towards dpCoA-capped RNAs in vitro. The polypeptide is Acyl-coenzyme A diphosphatase NUDT19 (NUDT19) (Gallus gallus (Chicken)).